The sequence spans 587 residues: Arginine--tRNA ligase (587 aa).

A 'HIGH' region motif is present at residues 127–137 (PNLAKEMHVGH).

It belongs to the class-I aminoacyl-tRNA synthetase family. Monomer.

It is found in the cytoplasm. The catalysed reaction is tRNA(Arg) + L-arginine + ATP = L-arginyl-tRNA(Arg) + AMP + diphosphate. The sequence is that of Arginine--tRNA ligase from Pseudomonas paraeruginosa (strain DSM 24068 / PA7) (Pseudomonas aeruginosa (strain PA7)).